We begin with the raw amino-acid sequence, 786 residues long: MGSTETRHPPAMFDWFFEAGCPNSLEEDPPILRQFPPDFQEQEAMQMVPRFCFPFDIEREPPSPAVQHFTFALTDLVGNRRFGFCRLRAGARSCLCILSHFPWFEVFYKILNNVGDLLAQNQVAEAEELLQNLQQHPLLGPRFSGRSEMDSSITVRSECGILPPALGNSKLLSCFVAPDAASLPSIPENRNLTELVVAVTDENIVGLFAALLAERRVLLTASKLSTLTACVHASCALLYPMRWEHVLIPTLPPHLLDYCCAPMPYLIGVHGSLAERVREKALEDVVVLNADSNTLETPFDDVQALPPDVVSLLRLRLRKVALSPGEGVSRLFLKVQALLFGGYRDALVCIPGQPVTFSEEAFLAQKPGAPLQAFHKKAVHLQLFKQFIESRLEKLNAGEGFSDQFEQEIIACRGASSGTLRSYQLWVDSLKKGSDALLHSMKTKTQPAVRNMYRSGDSLQEYCASKAKSGLKGMQNLLTIKDGDSGLQRGGSLRTPSLTSRSDRLQQRLPISQHFGQNRPLRPSRRLKTEEGPSEPLRERSPTLSPGDTQNPWAEDTLDGSFLGSGEELDLLSEILDSLNVETKSGDLQRASQSLDCCQRGAASESCSSLPDIPVGLPWQLEEDKRSQDPQPWSLPGDLSLLQDTPFSEVVSYSKNSCSQPFQQSPPSQGDPGPSLSKLDPRPSQSPCPKLLRVPTRHSPPESPQLLVSTEPNSDAVQRLQSISSPSCSHSAENPRNQPPQVLLGQACVQPLEELGAPTYVSHVSTQQRPQDKQPRVADLKKCFEN.

In terms of domain architecture, uDENN spans 13-158 (FDWFFEAGCP…MDSSITVRSE (146 aa)). The cDENN domain maps to 182-318 (SLPSIPENRN…VVSLLRLRLR (137 aa)). The 79-residue stretch at 320 to 398 (VALSPGEGVS…ESRLEKLNAG (79 aa)) folds into the dDENN domain. The FXDXF motif signature appears at 401 to 405 (FSDQF). The tract at residues 481-553 (KDGDSGLQRG…LSPGDTQNPW (73 aa)) is disordered. The segment covering 527–541 (LKTEEGPSEPLRERS) has biased composition (basic and acidic residues). Polar residues predominate over residues 542-552 (PTLSPGDTQNP). The residue at position 565 (Ser565) is a Phosphoserine. The short motif at 570–579 (DLLSEILDSL) is the Clathrin box element. Disordered stretches follow at residues 653–741 (YSKN…QPPQ) and 762–786 (SHVSTQQRPQDKQPRVADLKKCFEN). Residues 657–675 (SCSQPFQQSPPSQGDPGPS) show a composition bias toward low complexity. Residues 706 to 740 (LLVSTEPNSDAVQRLQSISSPSCSHSAENPRNQPP) are compositionally biased toward polar residues. Residues 770-786 (PQDKQPRVADLKKCFEN) are compositionally biased toward basic and acidic residues.

In terms of assembly, exhibits low nucleotide-independent RAB35-binding activity. Interacts with clathrin heavy chain/CLTC and with AP2A2, but not with AP2B1.

It is found in the cytoplasm. Its subcellular location is the cytosol. It localises to the cytoplasmic vesicle. The protein localises to the clathrin-coated vesicle. Its function is as follows. Guanine nucleotide exchange factor (GEF) which may activate RAB8A, RAB13 and RAB35. Promotes the exchange of GDP to GTP, converting inactive GDP-bound Rab proteins into their active GTP-bound form. This Mus musculus (Mouse) protein is DENN domain-containing protein 1C (Dennd1c).